Here is a 394-residue protein sequence, read N- to C-terminus: Elongation factor Tu (394 aa).

The region spanning 10–205 (KPHMNVGTIG…TMDSYFDLPE (196 aa)) is the tr-type G domain. A G1 region spans residues 19-26 (GHVDHGKT). Residue 19–26 (GHVDHGKT) participates in GTP binding. Residue T26 participates in Mg(2+) binding. A G2 region spans residues 61-65 (GITIN). Residues 82–85 (DCPG) form a G3 region. GTP-binding positions include 82–86 (DCPGH) and 137–140 (NKLD). Positions 137-140 (NKLD) are G4. The interval 173–175 (SAF) is G5.

This sequence belongs to the TRAFAC class translation factor GTPase superfamily. Classic translation factor GTPase family. EF-Tu/EF-1A subfamily. As to quaternary structure, monomer.

It localises to the cytoplasm. The catalysed reaction is GTP + H2O = GDP + phosphate + H(+). Functionally, GTP hydrolase that promotes the GTP-dependent binding of aminoacyl-tRNA to the A-site of ribosomes during protein biosynthesis. This Borrelia hermsii (strain HS1 / DAH) protein is Elongation factor Tu.